The primary structure comprises 513 residues: Histidine ammonia-lyase (513 aa).

The segment at residues 146–148 (ASG) is a cross-link (5-imidazolinone (Ala-Gly)). Ser-147 carries the 2,3-didehydroalanine (Ser) modification.

Belongs to the PAL/histidase family. Post-translationally, contains an active site 4-methylidene-imidazol-5-one (MIO), which is formed autocatalytically by cyclization and dehydration of residues Ala-Ser-Gly.

Its subcellular location is the cytoplasm. The enzyme catalyses L-histidine = trans-urocanate + NH4(+). It functions in the pathway amino-acid degradation; L-histidine degradation into L-glutamate; N-formimidoyl-L-glutamate from L-histidine: step 1/3. The chain is Histidine ammonia-lyase from Caulobacter vibrioides (strain NA1000 / CB15N) (Caulobacter crescentus).